The primary structure comprises 71 residues: DNA gyrase inhibitor YacG (71 aa).

4 residues coordinate Zn(2+): cysteine 9, cysteine 12, cysteine 28, and cysteine 32. The interval 43–71 (EEKRIPSQSESNDSDEWSEMPEQDPKPFN) is disordered. Acidic residues predominate over residues 54 to 64 (NDSDEWSEMPE).

Belongs to the DNA gyrase inhibitor YacG family. Interacts with GyrB. Zn(2+) serves as cofactor.

Inhibits all the catalytic activities of DNA gyrase by preventing its interaction with DNA. Acts by binding directly to the C-terminal domain of GyrB, which probably disrupts DNA binding by the gyrase. In Proteus mirabilis (strain HI4320), this protein is DNA gyrase inhibitor YacG.